A 195-amino-acid polypeptide reads, in one-letter code: Dephospho-CoA kinase (195 aa).

The 193-residue stretch at 3-195 (IIGLTGSIAM…LFVIKSLLKN (193 aa)) folds into the DPCK domain. 11-16 (AMGKST) is a binding site for ATP.

The protein belongs to the CoaE family.

The protein localises to the cytoplasm. The catalysed reaction is 3'-dephospho-CoA + ATP = ADP + CoA + H(+). Its pathway is cofactor biosynthesis; coenzyme A biosynthesis; CoA from (R)-pantothenate: step 5/5. Catalyzes the phosphorylation of the 3'-hydroxyl group of dephosphocoenzyme A to form coenzyme A. The protein is Dephospho-CoA kinase of Bartonella henselae (strain ATCC 49882 / DSM 28221 / CCUG 30454 / Houston 1) (Rochalimaea henselae).